Reading from the N-terminus, the 440-residue chain is MFLAQEIIRKKRDGHALSDEEIRFFINGIRDNTISEGQIAALAMTIFFHDMTMPERVSLTMAMRDSGTVLDWKSLHLNGPIVDKHSTGGVGDVTSLMLGPMVAACGGYIPMISGRGLGHTGGTLDKLESIPGFDIFPDDNRFREIIKDVGVAIIGQTSSLAPADKRFYATRDITATVDSIPLITASILAKKLAEGLDALVMDVKVGSGAFMPTYELSEALAEAIVGVANGAGVRTTALLTDMNQVLASSAGNAVEVREAVQFLTGEYRNPRLFDVTMALCVEMLISGKLAKDDAEARAKLQAVLDNGKAAEVFGRMVAAQKGPTDFVENYAKYLPTAMLTKAVYADTEGFVSEMDTRALGMAVVAMGGGRRQASDTIDYSVGFTDMARLGDQVDGQRPLAVIHAKDENNWQEAAKAVKAAIKLADKAPESTPTVYRRISE.

The protein belongs to the thymidine/pyrimidine-nucleoside phosphorylase family. Homodimer.

The enzyme catalyses thymidine + phosphate = 2-deoxy-alpha-D-ribose 1-phosphate + thymine. The protein operates within pyrimidine metabolism; dTMP biosynthesis via salvage pathway; dTMP from thymine: step 1/2. Its function is as follows. The enzymes which catalyze the reversible phosphorolysis of pyrimidine nucleosides are involved in the degradation of these compounds and in their utilization as carbon and energy sources, or in the rescue of pyrimidine bases for nucleotide synthesis. The chain is Thymidine phosphorylase from Escherichia coli (strain K12 / DH10B).